We begin with the raw amino-acid sequence, 112 residues long: Large ribosomal subunit protein bL20c (112 aa).

It belongs to the bacterial ribosomal protein bL20 family.

Its subcellular location is the plastid. The protein resides in the chloroplast. Functionally, binds directly to 23S ribosomal RNA and is necessary for the in vitro assembly process of the 50S ribosomal subunit. It is not involved in the protein synthesizing functions of that subunit. This Chlamydomonas reinhardtii (Chlamydomonas smithii) protein is Large ribosomal subunit protein bL20c (rpl20).